A 364-amino-acid polypeptide reads, in one-letter code: Valine dehydrogenase (364 aa).

K91 is an active-site residue. 191 to 197 (GVGKVGH) is a binding site for NAD(+).

The protein belongs to the Glu/Leu/Phe/Val dehydrogenases family. In terms of assembly, homodimer.

The protein resides in the cytoplasm. The enzyme catalyses L-valine + NAD(+) + H2O = 3-methyl-2-oxobutanoate + NH4(+) + NADH + H(+). It participates in amino-acid degradation; L-valine degradation. Its activity is regulated as follows. Inhibited by pyridoxal 5'-phosphate (PLP). In terms of biological role, oxidative deamination of branched-chain amino acids. Oxidizes L-valine and L-alpha-aminobutyric acid efficiently, and L-alanine and L-isoleucine less efficiently. D-valine and L-glutamate were not substrates for the enzyme. The catabolism of valine is the major source of fatty acid precursors for macrolide biosynthesis and a vital source of antibiotic precursors. This Streptomyces albus (strain ATCC 21838 / DSM 41398 / FERM P-419 / JCM 4703 / NBRC 107858) protein is Valine dehydrogenase.